The following is a 601-amino-acid chain: MTAKPIDTIRNFSIVAHIDHGKSTLADRLIQLTGALSAREMTEQVLDSMDIERERGITIKAQTVRLDYKAQDGREYVLNLMDTPGHVDFTYEVSRSLAACEGSLLVVDASQGVEAQTLANVYQAIDANHEIVPVLNKIDLPAAEPDRVKEQIEEVIGIDASEAVPISAKTGLNIEAVLEAIVAKLPPPKGDCEAPLKALLVDSWYDVYLGVVVLVRIVDGVLRKGMTIRMMGADAVYGVDRVGVFRPKMQDVAELGPGEVGFLTASIKEVADTRVGDTITEDRRPTDQALPGFKPVQPVVFCGLFPVDAAEFENLRAAMGKLRLNDASFSYEMETSAALGFGFRCGFLGLLHLEIIQERLEREFNLDLISTAPSVVYRLNMADGTMRELHNPADMPDVMKIDTIEEPWIRATILTPDDYLGGVLKLCQDRRGAQIDLNYVGKRAMVVYDLPLNEVVFDFYDRLKSISKGYASFDYHISDYREGDLVKMSILVNAEPVDALSMLVHRTRAESRGRAMCEKLKDLIPRHLFQIPVQAAIGGKIIARETIRALSKDVTAKCYGGDISRKRKLLDKQKEGKKRMRQFGKVEIPQEAFIAALKMDS.

The region spanning 7-189 (DTIRNFSIVA…AIVAKLPPPK (183 aa)) is the tr-type G domain. GTP contacts are provided by residues 19–24 (DHGKST) and 136–139 (NKID).

Belongs to the TRAFAC class translation factor GTPase superfamily. Classic translation factor GTPase family. LepA subfamily.

The protein resides in the cell inner membrane. It catalyses the reaction GTP + H2O = GDP + phosphate + H(+). Its function is as follows. Required for accurate and efficient protein synthesis under certain stress conditions. May act as a fidelity factor of the translation reaction, by catalyzing a one-codon backward translocation of tRNAs on improperly translocated ribosomes. Back-translocation proceeds from a post-translocation (POST) complex to a pre-translocation (PRE) complex, thus giving elongation factor G a second chance to translocate the tRNAs correctly. Binds to ribosomes in a GTP-dependent manner. The polypeptide is Elongation factor 4 (Methylobacterium sp. (strain 4-46)).